The following is a 1257-amino-acid chain: Receptor tyrosine-protein kinase erbB-2 (1257 aa).

An N-terminal signal peptide occupies residues 1–22 (MELAAWCRWGFLLALLPPGIAG). The Extracellular segment spans residues 23-654 (TQVCTGTDMK…PAEQRASPVT (632 aa)). Cysteine 26 and cysteine 53 are joined by a disulfide. Residues asparagine 68 and asparagine 188 are each glycosylated (N-linked (GlcNAc...) asparagine). Cystine bridges form between cysteine 163-cysteine 193, cysteine 196-cysteine 205, cysteine 200-cysteine 213, cysteine 221-cysteine 228, cysteine 225-cysteine 236, cysteine 237-cysteine 245, cysteine 241-cysteine 253, cysteine 256-cysteine 265, cysteine 269-cysteine 296, cysteine 300-cysteine 312, cysteine 316-cysteine 332, cysteine 335-cysteine 339, cysteine 343-cysteine 368, cysteine 476-cysteine 506, cysteine 513-cysteine 522, and cysteine 517-cysteine 530. An N-linked (GlcNAc...) asparagine glycan is attached at asparagine 260. A glycan (N-linked (GlcNAc...) asparagine) is linked at asparagine 532. 8 disulfides stabilise this stretch: cysteine 533–cysteine 542, cysteine 546–cysteine 562, cysteine 565–cysteine 578, cysteine 569–cysteine 586, cysteine 589–cysteine 598, cysteine 602–cysteine 625, cysteine 628–cysteine 636, and cysteine 632–cysteine 644. Asparagine 573 is a glycosylation site (N-linked (GlcNAc...) asparagine). N-linked (GlcNAc...) asparagine glycosylation is present at asparagine 631. A helical transmembrane segment spans residues 655–677 (FIIATVVGVLLFLILVVVVGILI). The tract at residues 678–691 (KRRRQKIRKYTMRR) is required for interaction with KPNB1 and EEA1. The Nuclear localization signal motif lies at 678-691 (KRRRQKIRKYTMRR). The Cytoplasmic portion of the chain corresponds to 678 to 1257 (KRRRQKIRKY…PEYLGLDVPV (580 aa)). Positions 722–989 (LRKVKVLGSG…RMARDPQRFV (268 aa)) constitute a Protein kinase domain. Residues 728–736 (LGSGAFGTV) and lysine 755 contribute to the ATP site. The active-site Proton acceptor is aspartate 847. Tyrosine 879 bears the Phosphotyrosine mark. A disordered region spans residues 1029-1181 (QQGFFSPDPT…PKTLSPGKNG (153 aa)). Phosphoserine occurs at positions 1056, 1080, 1085, and 1109. Tyrosine 1114 is modified (phosphotyrosine). Position 1141 is a phosphotyrosine; by autocatalysis (tyrosine 1141). Pro residues predominate over residues 1149–1163 (PQPPLTPEGPLPPVR). Threonine 1168 bears the Phosphothreonine mark. Positions 1197 to 1199 (EYL) are interaction with PIK3C2B. Phosphotyrosine is present on tyrosine 1198. The segment at 1200 to 1257 (VPREGTASPPHPSPAFSPAFDNLYYWDQNSSEQGPPPSNFEGTPTAENPEYLGLDVPV) is disordered. Tyrosine 1250 carries the phosphotyrosine; by autocatalysis modification.

This sequence belongs to the protein kinase superfamily. Tyr protein kinase family. EGF receptor subfamily. As to quaternary structure, homodimer. Heterodimer with EGFR, ERBB3 and ERBB4. Part of a complex with EGFR and either PIK3C2A or PIK3C2B. May interact with PIK3C2B when phosphorylated on Tyr-1198. Interacts with PRKCABP and PLXNB1. Interacts (when phosphorylated on Tyr-1250) with MEMO1. Interacts with MUC1. Interacts (when phosphorylated on Tyr-1141) with GRB7 (via SH2 domain). Interacts (when phosphorylated on Tyr-1250) with ERBIN Interacts with SRC, KPNB1, RANBP2, EEA1, CRM1, CLTC, PTK6, RPA194, MYOC and ACTB. Interacts with HSP90AA1 and HSP90AB1; the interaction suppresses ERBB2 kinase activity. Interacts with SORL1; this interaction regulates ERBB2 subcellular distribution by promoting its recycling after internalization from endosomes back to the plasma membrane, hence stimulates ERBB2-mediated signaling. Interacts with SH3BGRL. Interacts with ROR1. Autophosphorylated. Autophosphorylation occurs in trans, i.e. one subunit of the dimeric receptor phosphorylates tyrosine residues on the other subunit. Ligand-binding increases phosphorylation on tyrosine residues. Signaling via SEMA4C promotes phosphorylation at Tyr-1250. Dephosphorylated by PTPN12.

The protein resides in the cell membrane. It is found in the cell projection. It localises to the ruffle membrane. Its subcellular location is the early endosome. The protein localises to the cytoplasm. The protein resides in the perinuclear region. It is found in the nucleus. It carries out the reaction L-tyrosyl-[protein] + ATP = O-phospho-L-tyrosyl-[protein] + ADP + H(+). Functionally, protein tyrosine kinase that is part of several cell surface receptor complexes, but that apparently needs a coreceptor for ligand binding. Essential component of a neuregulin-receptor complex, although neuregulins do not interact with it alone. GP30 is a potential ligand for this receptor. Regulates outgrowth and stabilization of peripheral microtubules (MTs). Upon ERBB2 activation, the MEMO1-RHOA-DIAPH1 signaling pathway elicits the phosphorylation and thus the inhibition of GSK3B at cell membrane. This prevents the phosphorylation of APC and CLASP2, allowing its association with the cell membrane. In turn, membrane-bound APC allows the localization of MACF1 to the cell membrane, which is required for microtubule capture and stabilization. Interacts (preferentially with the tyrosine phosphorylated form) with CPNE3; this interaction occurs at the cell membrane and is increased in a growth factor heregulin-dependent manner. Its function is as follows. In the nucleus is involved in transcriptional regulation. Associates with the 5'-TCAAATTC-3' sequence in the PTGS2/COX-2 promoter and activates its transcription. Implicated in transcriptional activation of CDKN1A; the function involves STAT3 and SRC. Involved in the transcription of rRNA genes by RNA Pol I and enhances protein synthesis and cell growth. The chain is Receptor tyrosine-protein kinase erbB-2 (Erbb2) from Rattus norvegicus (Rat).